A 205-amino-acid chain; its full sequence is Thiamine-phosphate synthase (205 aa).

4-amino-2-methyl-5-(diphosphooxymethyl)pyrimidine-binding positions include 35–39 and asparagine 67; that span reads QYRDK. Residues aspartate 68 and aspartate 86 each coordinate Mg(2+). Residue threonine 105 participates in 4-amino-2-methyl-5-(diphosphooxymethyl)pyrimidine binding. Position 132–134 (132–134) interacts with 2-[(2R,5Z)-2-carboxy-4-methylthiazol-5(2H)-ylidene]ethyl phosphate; it reads SLT. Lysine 135 serves as a coordination point for 4-amino-2-methyl-5-(diphosphooxymethyl)pyrimidine. Glycine 162 contributes to the 2-[(2R,5Z)-2-carboxy-4-methylthiazol-5(2H)-ylidene]ethyl phosphate binding site.

This sequence belongs to the thiamine-phosphate synthase family. Mg(2+) is required as a cofactor.

It catalyses the reaction 2-[(2R,5Z)-2-carboxy-4-methylthiazol-5(2H)-ylidene]ethyl phosphate + 4-amino-2-methyl-5-(diphosphooxymethyl)pyrimidine + 2 H(+) = thiamine phosphate + CO2 + diphosphate. The catalysed reaction is 2-(2-carboxy-4-methylthiazol-5-yl)ethyl phosphate + 4-amino-2-methyl-5-(diphosphooxymethyl)pyrimidine + 2 H(+) = thiamine phosphate + CO2 + diphosphate. The enzyme catalyses 4-methyl-5-(2-phosphooxyethyl)-thiazole + 4-amino-2-methyl-5-(diphosphooxymethyl)pyrimidine + H(+) = thiamine phosphate + diphosphate. It participates in cofactor biosynthesis; thiamine diphosphate biosynthesis; thiamine phosphate from 4-amino-2-methyl-5-diphosphomethylpyrimidine and 4-methyl-5-(2-phosphoethyl)-thiazole: step 1/1. Functionally, condenses 4-methyl-5-(beta-hydroxyethyl)thiazole monophosphate (THZ-P) and 2-methyl-4-amino-5-hydroxymethyl pyrimidine pyrophosphate (HMP-PP) to form thiamine monophosphate (TMP). The polypeptide is Thiamine-phosphate synthase (Pseudomonas syringae pv. syringae (strain B728a)).